An 81-amino-acid chain; its full sequence is Acyl carrier protein (81 aa).

In terms of domain architecture, Carrier spans 1-79 (MDVAAMQVKI…DIFDYLAKNK (79 aa)). S39 is modified (O-(pantetheine 4'-phosphoryl)serine).

The protein belongs to the acyl carrier protein (ACP) family. Post-translationally, 4'-phosphopantetheine is transferred from CoA to a specific serine of apo-ACP by AcpS. This modification is essential for activity because fatty acids are bound in thioester linkage to the sulfhydryl of the prosthetic group.

It is found in the cytoplasm. The protein operates within lipid metabolism; fatty acid biosynthesis. Its function is as follows. Carrier of the growing fatty acid chain in fatty acid biosynthesis. The chain is Acyl carrier protein from Syntrophobacter fumaroxidans (strain DSM 10017 / MPOB).